A 78-amino-acid polypeptide reads, in one-letter code: Large ribosomal subunit protein bL28 (78 aa).

The protein belongs to the bacterial ribosomal protein bL28 family.

The protein is Large ribosomal subunit protein bL28 of Prochlorococcus marinus (strain MIT 9211).